The chain runs to 346 residues: Inositol 2-dehydrogenase/D-chiro-inositol 3-dehydrogenase (346 aa).

Residues 322-331 (GREESIELPK) are compositionally biased toward basic and acidic residues. Residues 322–346 (GREESIELPKKPAFYQHSAATPEQV) form a disordered region.

Belongs to the Gfo/Idh/MocA family. As to quaternary structure, homotetramer.

It carries out the reaction myo-inositol + NAD(+) = scyllo-inosose + NADH + H(+). It catalyses the reaction 1D-chiro-inositol + NAD(+) = scyllo-inosine + NADH + H(+). The protein operates within polyol metabolism; myo-inositol degradation into acetyl-CoA; acetyl-CoA from myo-inositol: step 1/7. Functionally, involved in the oxidation of myo-inositol (MI) and D-chiro-inositol (DCI) to 2-keto-myo-inositol (2KMI or 2-inosose) and 1-keto-D-chiro-inositol (1KDCI), respectively. The protein is Inositol 2-dehydrogenase/D-chiro-inositol 3-dehydrogenase of Shouchella clausii (strain KSM-K16) (Alkalihalobacillus clausii).